Reading from the N-terminus, the 569-residue chain is Dicarboxylate transporter 1, chloroplastic (569 aa).

The N-terminal 93 residues, Met1 to Pro93, are a transit peptide targeting the chloroplast. Positions Ser23–Pro74 are enriched in low complexity. The tract at residues Ser23–Pro93 is disordered. Pro residues predominate over residues Thr75–Val90. Helical transmembrane passes span Pro106 to Val126, Leu134 to Val154, Ala172 to Ala192, Ala241 to Gly261, Leu268 to Leu288, Ala317 to Tyr337, Ile367 to Val387, Asp388 to Trp408, Trp423 to Phe443, Val450 to Phe470, Phe490 to Phe510, and Tyr543 to Trp563.

Belongs to the SLC13A/DASS transporter (TC 2.A.47) family. DIT1 subfamily. Monomer. Post-translationally, the N-terminus is blocked. In terms of tissue distribution, expressed in leaves.

Its subcellular location is the plastid. The protein localises to the chloroplast inner membrane. 2-oxoglutarate/malate translocator that transports carbon skeletons into chloroplasts for net glutamate synthesis. This translocator exchanges malate for internal succinate, fumarate and 2-oxoglutarate but not for aspartate and glutamate. Involved with DIT2 in primary ammonia assimilation and in the re-assimilation of ammonia generated by the photorespiratory pathway. Imports 2-oxoglutarate into plastids as precursor for ammonia assimilation. 2-oxoglutarate is converted to glutamate, the end product of ammonia assimilation, which is exported to the cytosol by DIT2. The protein is Dicarboxylate transporter 1, chloroplastic (DIT1) of Spinacia oleracea (Spinach).